The following is a 779-amino-acid chain: Protocadherin beta-8 (779 aa).

Positions 1 to 28 (METALTKTPEKRQVIFLAILLLLWEASS) are cleaved as a signal peptide. Over 29 to 690 (EAISYSMPEE…QEEDMLTLYL (662 aa)) the chain is Extracellular. 5 Cadherin domains span residues 75 to 133 (LQLD…FPEF), 134 to 242 (PDTE…APQF), 243 to 346 (LQSL…APKL), 347 to 450 (TISS…APAF), and 451 to 560 (TQTS…APFV). Cysteines 96 and 102 form a disulfide. N-linked (GlcNAc...) asparagine glycosylation occurs at Asn169. An O-linked (Man) serine glycan is attached at Ser223. 2 O-linked (Man) threonine glycosylation sites follow: Thr225 and Thr227. Asn417 carries an N-linked (GlcNAc...) asparagine glycan. Asn566 carries an N-linked (GlcNAc...) asparagine glycan. The region spanning 575-675 (LPRAAEPGYL…SQPYLPLPEV (101 aa)) is the Cadherin 6 domain. A helical transmembrane segment spans residues 691–711 (VIALASVSSLFLLSVLLFVGV). Over 712-779 (KLCKKAREAS…IIPSSLLQDS (68 aa)) the chain is Cytoplasmic.

In terms of assembly, forms homodimers in trans (molecules expressed by two different cells). Forms promiscuous heterodimers in cis (at the plasma membrane of the same cell) with other protocadherins.

The protein localises to the cell membrane. Functionally, calcium-dependent cell-adhesion protein involved in cells self-recognition and non-self discrimination. Thereby, it is involved in the establishment and maintenance of specific neuronal connections in the brain. In Mus musculus (Mouse), this protein is Protocadherin beta-8.